Here is a 297-residue protein sequence, read N- to C-terminus: MMVNDIEYIRQAEATRVQVLSEALPYIQQFAGRTVVVKYGGAAMKDSHLKDQVIRDIVFLSCVGLRPILVHGGGPEINSWLDKLGIEAQFKNGLRVTDAPTMDVVEMVLVGRVNKEIVSLINQAGGLAVGLCGKDGNLITARPQGQEGIGFVGEVSNVNIKILETLASNGYIPVVSSVAADDSGQAYNINADTVAGEIAAALGAEKLILLTDTRGILKDYQDPGTLIPKVDIREARELINSGVVSGGMIPKVTCCVRSLAQGVRAAHIIDGRIPHALLLEIFTDVGIGTMILGSQYS.

Substrate contacts are provided by residues glycine 73 to glycine 74, arginine 95, and asparagine 188.

The protein belongs to the acetylglutamate kinase family. ArgB subfamily.

It localises to the cytoplasm. The enzyme catalyses N-acetyl-L-glutamate + ATP = N-acetyl-L-glutamyl 5-phosphate + ADP. It participates in amino-acid biosynthesis; L-arginine biosynthesis; N(2)-acetyl-L-ornithine from L-glutamate: step 2/4. Catalyzes the ATP-dependent phosphorylation of N-acetyl-L-glutamate. This Nostoc sp. (strain PCC 7120 / SAG 25.82 / UTEX 2576) protein is Acetylglutamate kinase.